The primary structure comprises 630 residues: Eukaryotic translation initiation factor 2-alpha kinase 1 (630 aa).

The segment at 1-40 (MQGGNSGVRKREEEGDGAGAVAAPPAIDFPAEGPDPEYDE) is disordered. The SIFI-degron motif lies at 85 to 104 (LRSRQVFKLLCQTFIKMGLL). Positions 167 to 583 (FEELAILGKG…AIQLLQSELF (417 aa)) constitute a Protein kinase domain. ATP contacts are provided by residues 173–181 (LGKGGYGRV) and Lys196. The disordered stretch occupies residues 259 to 301 (DQEEDREQCGVKNDESSSSSIIFAEPTPEKEKRFGESDTENQN). A Phosphothreonine modification is found at Thr285. The span at 285 to 294 (TPEKEKRFGE) shows a compositional bias: basic and acidic residues. Residues 410–415 (ACPYVM) form an HRM 1 repeat. Asp442 serves as the catalytic Proton acceptor. Thr486 and Thr488 each carry phosphothreonine; by autocatalysis. Phosphothreonine is present on Thr493. The HRM 2 repeat unit spans residues 552–557 (RCPVQA).

It belongs to the protein kinase superfamily. Ser/Thr protein kinase family. GCN2 subfamily. As to quaternary structure, synthesized in an inactive form that binds to the N-terminal domain of CDC37. Has to be associated with a multiprotein complex containing Hsp90, CDC37 and PPP5C for maturation and activation by autophosphorylation. The phosphatase PPP5C modulates this activation. Homodimer; homodimerizes in presence of heme, forming a disulfide-linked inactive homodimer. Interacts with DELE1; binds both to full-length DELE1 and processed form of DELE1 (S-DELE1) in response to stress, leading to activate its protein kinase activity and trigger the integrated stress response (ISR). Post-translationally, activated by autophosphorylation; phosphorylated predominantly on serine and threonine residues, but also on tyrosine residues. Autophosphorylation at Thr-488 is required for kinase activation. The active autophosphorylated form apparently is largely refractory to cellular heme fluctuations. Ubiquitinated and degraded by the SIFI complex once the mitochondrial stress has been resolved, thereby providing stress response silencing. Within the SIFI complex, UBR4 initiates ubiquitin chain that are further elongated or branched by KCMF1.

The enzyme catalyses L-seryl-[protein] + ATP = O-phospho-L-seryl-[protein] + ADP + H(+). The catalysed reaction is L-threonyl-[protein] + ATP = O-phospho-L-threonyl-[protein] + ADP + H(+). Its activity is regulated as follows. In normal conditions, the protein kinase activity is inhibited; inhibition is relieved by various stress conditions. Inhibited by heme: in presence of heme, forms a disulfide-linked inactive homodimer. Heme depletion relieves inhibition and stimulates kinase activity by autophosphorylation. Inhibited by the heme metabolites biliverdin and bilirubin. Induced by oxidative stress generated by arsenite treatment. Binding of nitric oxide (NO) to the heme iron in the N-terminal heme-binding domain activates the kinase activity, while binding of carbon monoxide (CO) suppresses kinase activity. Protein kinase activity is also activated upon binding to DELE1 in response to various stress, triggering the integrated stress response (ISR): activated by full-length DELE1 in response to iron deficiency, while it is activated by the processed form of DELE1 (S-DELE1) in response to mitochondrial stress. Its function is as follows. Metabolic-stress sensing protein kinase that phosphorylates the alpha subunit of eukaryotic translation initiation factor 2 (EIF2S1/eIF-2-alpha) in response to various stress conditions. Key activator of the integrated stress response (ISR) required for adaptation to various stress, such as heme deficiency, oxidative stress, osmotic shock, mitochondrial dysfunction and heat shock. EIF2S1/eIF-2-alpha phosphorylation in response to stress converts EIF2S1/eIF-2-alpha in a global protein synthesis inhibitor, leading to a global attenuation of cap-dependent translation, while concomitantly initiating the preferential translation of ISR-specific mRNAs, such as the transcriptional activator ATF4, and hence allowing ATF4-mediated reprogramming. Acts as a key sensor of heme-deficiency: in normal conditions, binds hemin via a cysteine thiolate and histidine nitrogenous coordination, leading to inhibit the protein kinase activity. This binding occurs with moderate affinity, allowing it to sense the heme concentration within the cell: heme depletion relieves inhibition and stimulates kinase activity, activating the ISR. Thanks to this unique heme-sensing capacity, plays a crucial role to shut off protein synthesis during acute heme-deficient conditions. In red blood cells (RBCs), controls hemoglobin synthesis ensuring a coordinated regulation of the synthesis of its heme and globin moieties. It thereby plays an essential protective role for RBC survival in anemias of iron deficiency. Iron deficiency also triggers activation by full-length DELE1. Also activates the ISR in response to mitochondrial dysfunction: HRI/EIF2AK1 protein kinase activity is activated upon binding to the processed form of DELE1 (S-DELE1), thereby promoting the ATF4-mediated reprogramming. Also acts as an activator of mitophagy in response to mitochondrial damage: catalyzes phosphorylation of eIF-2-alpha (EIF2S1) following activation by S-DELE1, thereby promoting mitochondrial localization of EIF2S1, triggering PRKN-independent mitophagy. The polypeptide is Eukaryotic translation initiation factor 2-alpha kinase 1 (Homo sapiens (Human)).